Consider the following 703-residue polypeptide: MRESTWVSLLLLLLLPAPQRGGPQDGRGSPEPEPERGPLQPFDLLYASGVAAYYSGDYEGAVRDLEAALRSHRRLRDIRTRCARHCAARRPLAPPGAGPGAELPFFRAVLERARCSRSCQSQRLGGPASRHRVSEDVRSDFQRRVPYNYLQRAYIKLNQLDKAMEAAHTFFMANPEHMEMQQNIEDYKATARVEAPLVDREAKPHLESYNAGVKHYEADDFEAAIKYFEQALREYFNEDMVCRALCEGPQRFEEYEYLGSKGSLYEAIADHYMQVLVCQHECVRELATRPGRLSPIENFLPLHYDYLQFAYYRVGEYVKALECAKAYLMFHPDDQDVLDNVDFYESLLDDSTDPASIEAREDLTAFVKRHKLEAELIKSAAEGLGFSYSEPNYWISYGGRQDENRVPSGVNMDGAEVHGLSMGKKSPPKIGRDLREGGPLLYENITFVYNSEQLNGTQRVLLDNVLSEEQCRELHSVASGIMLVGDGYRGKTSPHTPNEKFEGATVLKALKFGYEGRVPLKSARLFYDISEKARKIVESYFMLNSTLYFSYTHMVCRTALSGQQDRRNDLSHPIHADNCLLDPEANECWKEPPAYTFRDYSALLYMNDDFEGGEFIFTEMDAKTVTASIKPKCGRMISFSSGGENPHGVKAVTRGQRCAVALWFTLDPLYRELERIQADEVIAILDQEQHGKHGLNINPKDEL.

Residues 1–21 (MRESTWVSLLLLLLLPAPQRG) form the signal peptide. A disordered region spans residues 18-40 (PQRGGPQDGRGSPEPEPERGPLQ). TPR repeat units follow at residues 42–75 (FDLL…HRRL), 144–177 (RVPY…NPEH), 205–238 (HLES…YFNE), and 301–334 (PLHY…HPDD). Residues Asn444, Asn455, and Asn544 are each glycosylated (N-linked (GlcNAc...) asparagine). The 115-residue stretch at 552–666 (THMVCRTALS…RCAVALWFTL (115 aa)) folds into the Fe2OG dioxygenase domain. Fe cation-binding residues include His575, Asp577, and His647. Residue Arg657 is part of the active site. Residues 700–703 (KDEL) carry the Prevents secretion from ER motif.

This sequence belongs to the leprecan family. The cofactor is Fe cation. It depends on L-ascorbate as a cofactor. As to expression, detected at low levels in cartilage.

The protein resides in the endoplasmic reticulum. It is found in the sarcoplasmic reticulum. It localises to the golgi apparatus. It carries out the reaction L-prolyl-[collagen] + 2-oxoglutarate + O2 = trans-3-hydroxy-L-prolyl-[collagen] + succinate + CO2. Prolyl 3-hydroxylase that catalyzes the post-translational formation of 3-hydroxyproline on collagens. Contributes to proline 3-hydroxylation of collagen COL4A1 and COL1A1 in tendons, the eye sclera and in the eye lens capsule. Has high activity with the type IV collagen COL4A1, and lower activity with COL1A1. Catalyzes hydroxylation of the first Pro in Gly-Pro-Hyp sequences where Hyp is 4-hydroxyproline. Has no activity on substrates that lack 4-hydroxyproline in the third position. This chain is Prolyl 3-hydroxylase 2, found in Rattus norvegicus (Rat).